We begin with the raw amino-acid sequence, 270 residues long: Probable septum site-determining protein MinC (270 aa).

The protein belongs to the MinC family. In terms of assembly, interacts with MinD and FtsZ.

Cell division inhibitor that blocks the formation of polar Z ring septums. Rapidly oscillates between the poles of the cell to destabilize FtsZ filaments that have formed before they mature into polar Z rings. Prevents FtsZ polymerization. This chain is Probable septum site-determining protein MinC, found in Cupriavidus necator (strain ATCC 17699 / DSM 428 / KCTC 22496 / NCIMB 10442 / H16 / Stanier 337) (Ralstonia eutropha).